The following is a 286-amino-acid chain: Bifunctional protein FolD (286 aa).

Residues 165–167 and Ser-190 contribute to the NADP(+) site; that span reads GRS.

The protein belongs to the tetrahydrofolate dehydrogenase/cyclohydrolase family. Homodimer.

It carries out the reaction (6R)-5,10-methylene-5,6,7,8-tetrahydrofolate + NADP(+) = (6R)-5,10-methenyltetrahydrofolate + NADPH. The catalysed reaction is (6R)-5,10-methenyltetrahydrofolate + H2O = (6R)-10-formyltetrahydrofolate + H(+). The protein operates within one-carbon metabolism; tetrahydrofolate interconversion. Catalyzes the oxidation of 5,10-methylenetetrahydrofolate to 5,10-methenyltetrahydrofolate and then the hydrolysis of 5,10-methenyltetrahydrofolate to 10-formyltetrahydrofolate. This chain is Bifunctional protein FolD, found in Burkholderia cenocepacia (strain ATCC BAA-245 / DSM 16553 / LMG 16656 / NCTC 13227 / J2315 / CF5610) (Burkholderia cepacia (strain J2315)).